We begin with the raw amino-acid sequence, 435 residues long: Chaperone SurA (435 aa).

The first 24 residues, 1–24 (MRLRSFAFLGFMLLVAMAPSMASA), serve as a signal peptide directing secretion. PpiC domains follow at residues 173 to 274 (DTAY…KLID) and 286 to 385 (VTEN…ELED).

The protein resides in the periplasm. The enzyme catalyses [protein]-peptidylproline (omega=180) = [protein]-peptidylproline (omega=0). Chaperone involved in the correct folding and assembly of outer membrane proteins. Recognizes specific patterns of aromatic residues and the orientation of their side chains, which are found more frequently in integral outer membrane proteins. May act in both early periplasmic and late outer membrane-associated steps of protein maturation. This is Chaperone SurA from Chromohalobacter salexigens (strain ATCC BAA-138 / DSM 3043 / CIP 106854 / NCIMB 13768 / 1H11).